An 851-amino-acid polypeptide reads, in one-letter code: Meiotically up-regulated gene 87 protein (851 aa).

This sequence belongs to the nucleoporin interacting component (NIC) family.

The protein localises to the nucleus envelope. Has a role in meiosis. The polypeptide is Meiotically up-regulated gene 87 protein (mug87) (Schizosaccharomyces pombe (strain 972 / ATCC 24843) (Fission yeast)).